Reading from the N-terminus, the 215-residue chain is Large ribosomal subunit protein uL3 (215 aa).

Residues 136 to 155 (GVSISHRSHGSTGQRQDPGK) form a disordered region. Glutamine 151 is modified (N5-methylglutamine).

The protein belongs to the universal ribosomal protein uL3 family. Part of the 50S ribosomal subunit. Forms a cluster with proteins L14 and L19. Post-translationally, methylated by PrmB.

One of the primary rRNA binding proteins, it binds directly near the 3'-end of the 23S rRNA, where it nucleates assembly of the 50S subunit. In Rickettsia typhi (strain ATCC VR-144 / Wilmington), this protein is Large ribosomal subunit protein uL3.